Here is a 427-residue protein sequence, read N- to C-terminus: Trigger factor (427 aa).

In terms of domain architecture, PPIase FKBP-type spans 160-240; sequence TDTVIGDVEK…VKEVKRLELP (81 aa).

Belongs to the FKBP-type PPIase family. Tig subfamily.

Its subcellular location is the cytoplasm. It carries out the reaction [protein]-peptidylproline (omega=180) = [protein]-peptidylproline (omega=0). In terms of biological role, involved in protein export. Acts as a chaperone by maintaining the newly synthesized protein in an open conformation. Functions as a peptidyl-prolyl cis-trans isomerase. In Chlorobium phaeobacteroides (strain DSM 266 / SMG 266 / 2430), this protein is Trigger factor.